The primary structure comprises 1276 residues: Component of gems protein 5 (1276 aa).

An interaction with U4 snRNA region spans residues 53–55 (NWY). WD repeat units follow at residues 92 to 139 (GHTD…DDHN), 183 to 223 (EHKA…VFPI), 228 to 268 (GNNI…TVCK), 271 to 336 (AHSA…IESG), 364 to 405 (NDKQ…SPPE), 438 to 481 (TTKN…IKIQ), 485 to 522 (GFVY…KDAY), and 530 to 574 (GIQS…SKIF). The disordered stretch occupies residues 138–157 (HNEDTEIGDDFKHGSGGGGS). Positions 586–652 (IWKPPPTPTP…NSNNEQQPNK (67 aa)) are disordered. The segment covering 598 to 646 (NINNNNNNNNNNNNNNNNNNNNNNNNNNNNNNNNNNNNINNNNNNNSNN) has biased composition (low complexity). WD repeat units follow at residues 688-727 (TFSK…LTRI) and 729-771 (EHKK…NQNE). Positions 772–793 (NEKKIDNEKGKENENEKGKENE) are enriched in basic and acidic residues. The segment at 772 to 809 (NEKKIDNEKGKENENEKGKENENENENENENENENENE) is disordered. The stretch at 778–829 (NEKGKENENEKGKENENENENENENENENENENEIENIVNNNNENDTEIEIK) forms a coiled coil. Acidic residues predominate over residues 794–809 (NENENENENENENENE). 2 WD repeats span residues 863–903 (GHKN…AISN) and 906–946 (GHDG…FKTV). A disordered region spans residues 967-997 (ITEQQQQQQQPQSPIKSNPDQSNNPSLVPPI). The span at 979 to 992 (SPIKSNPDQSNNPS) shows a compositional bias: polar residues.

The protein belongs to the WD repeat gemin-5 family. As to quaternary structure, part of the core SMN complex.

The protein resides in the nucleus. It localises to the nucleoplasm. It is found in the gem. Its subcellular location is the cytoplasm. The SMN complex catalyzes the assembly of small nuclear ribonucleoproteins (snRNPs), the building blocks of the spliceosome, and thereby plays an important role in the splicing of cellular pre-mRNAs. Most spliceosomal snRNPs contain a common set of Sm proteins SNRPB, SNRPD1, SNRPD2, SNRPD3, SNRPE, SNRPF and SNRPG that assemble in a heptameric protein ring on the Sm site of the small nuclear RNA to form the core snRNP (Sm core). In the cytosol, the Sm proteins SNRPD1, SNRPD2, SNRPE, SNRPF and SNRPG are trapped in an inactive 6S pICln-Sm complex by the chaperone CLNS1A that controls the assembly of the core snRNP. To assemble core snRNPs, the SMN complex accepts the trapped 5Sm proteins from CLNS1A forming an intermediate. Binding of snRNA inside 5Sm ultimately triggers eviction of the SMN complex, thereby allowing binding of SNRPD3 and SNRPB to complete assembly of the core snRNP. Within the SMN complex, GEMIN5 recognizes and delivers the small nuclear RNAs (snRNAs) to the SMN complex. Binds to the 7-methylguanosine cap of RNA molecules. This Dictyostelium discoideum (Social amoeba) protein is Component of gems protein 5 (gemin5).